The following is a 345-amino-acid chain: Methylthioribose-1-phosphate isomerase 2 (345 aa).

Substrate contacts are provided by residues R47–A49, R88, and Q194. Catalysis depends on D235, which acts as the Proton donor. Residue N245–K246 coordinates substrate.

This sequence belongs to the eIF-2B alpha/beta/delta subunits family. MtnA subfamily.

The enzyme catalyses 5-(methylsulfanyl)-alpha-D-ribose 1-phosphate = 5-(methylsulfanyl)-D-ribulose 1-phosphate. Its pathway is amino-acid biosynthesis; L-methionine biosynthesis via salvage pathway; L-methionine from S-methyl-5-thio-alpha-D-ribose 1-phosphate: step 1/6. Catalyzes the interconversion of methylthioribose-1-phosphate (MTR-1-P) into methylthioribulose-1-phosphate (MTRu-1-P). The polypeptide is Methylthioribose-1-phosphate isomerase 2 (Pseudothermotoga lettingae (strain ATCC BAA-301 / DSM 14385 / NBRC 107922 / TMO) (Thermotoga lettingae)).